Consider the following 617-residue polypeptide: Probable LRR receptor-like serine/threonine-protein kinase RKF3 (617 aa).

The signal sequence occupies residues 1–20 (MLFLRRIAVVFFVFTSFSAA). Residues 21–212 (QNSTCPLDFS…PTSSGANKVK (192 aa)) are Extracellular-facing. N-linked (GlcNAc...) asparagine glycosylation is found at Asn22, Asn124, Asn135, and Asn165. A helical membrane pass occupies residues 213 to 233 (VLVSSFSVLLVASVLVITAWF). Residues 234–617 (WYCRRKKSKL…DGPSGNTNTT (384 aa)) lie on the Cytoplasmic side of the membrane. In terms of domain architecture, Protein kinase spans 283 to 563 (FSRHNIIGRG…VKMLESNEFT (281 aa)). ATP-binding positions include 289 to 297 (IGRGGYGNV) and Lys311. Catalysis depends on Asp412, which acts as the Proton acceptor. The interval 585 to 617 (VSSSSGSGKLTSPTGYQAFSFGGDGPSGNTNTT) is disordered.

Belongs to the protein kinase superfamily. Ser/Thr protein kinase family. In terms of tissue distribution, expressed in the whole plant at low levels.

Its subcellular location is the cell membrane. The enzyme catalyses L-seryl-[protein] + ATP = O-phospho-L-seryl-[protein] + ADP + H(+). It carries out the reaction L-threonyl-[protein] + ATP = O-phospho-L-threonyl-[protein] + ADP + H(+). This is Probable LRR receptor-like serine/threonine-protein kinase RKF3 (RKF3) from Arabidopsis thaliana (Mouse-ear cress).